The following is a 154-amino-acid chain: Urease accessory protein UreE (154 aa).

This sequence belongs to the UreE family.

It is found in the cytoplasm. Functionally, involved in urease metallocenter assembly. Binds nickel. Probably functions as a nickel donor during metallocenter assembly. The sequence is that of Urease accessory protein UreE from Prochlorococcus marinus subsp. pastoris (strain CCMP1986 / NIES-2087 / MED4).